A 91-amino-acid chain; its full sequence is Cytochrome b-c1 complex subunit 6, mitochondrial (91 aa).

A mitochondrion-targeting transit peptide spans 1-13 (MGLEDEQKMLTES). The interval 1–30 (MGLEDEQKMLTESGDPEEEEEEEEELVDPL) is disordered. Positions 14–27 (GDPEEEEEEEEELV) are enriched in acidic residues. Cystine bridges form between cysteine 37–cysteine 81 and cysteine 53–cysteine 67. The residue at position 42 (lysine 42) is an N6-acetyllysine. Lysine 85 is modified (N6-acetyllysine).

This sequence belongs to the UQCRH/QCR6 family. In terms of assembly, component of the ubiquinol-cytochrome c oxidoreductase (cytochrome b-c1 complex, complex III, CIII), a multisubunit enzyme composed of 11 subunits. The complex is composed of 3 respiratory subunits cytochrome b, cytochrome c1 and Rieske protein UQCRFS1, 2 core protein subunits UQCRC1/QCR1 and UQCRC2/QCR2, and 6 low-molecular weight protein subunits UQCRH/QCR6, UQCRB/QCR7, UQCRQ/QCR8, UQCR10/QCR9, UQCR11/QCR10 and subunit 9, the cleavage product of Rieske protein UQCRFS1. The complex exists as an obligatory dimer and forms supercomplexes (SCs) in the inner mitochondrial membrane with NADH-ubiquinone oxidoreductase (complex I, CI) and cytochrome c oxidase (complex IV, CIV), resulting in different assemblies (supercomplex SCI(1)III(2)IV(1) and megacomplex MCI(2)III(2)IV(2)).

It localises to the mitochondrion inner membrane. In terms of biological role, component of the ubiquinol-cytochrome c oxidoreductase, a multisubunit transmembrane complex that is part of the mitochondrial electron transport chain which drives oxidative phosphorylation. The respiratory chain contains 3 multisubunit complexes succinate dehydrogenase (complex II, CII), ubiquinol-cytochrome c oxidoreductase (cytochrome b-c1 complex, complex III, CIII) and cytochrome c oxidase (complex IV, CIV), that cooperate to transfer electrons derived from NADH and succinate to molecular oxygen, creating an electrochemical gradient over the inner membrane that drives transmembrane transport and the ATP synthase. The cytochrome b-c1 complex catalyzes electron transfer from ubiquinol to cytochrome c, linking this redox reaction to translocation of protons across the mitochondrial inner membrane, with protons being carried across the membrane as hydrogens on the quinol. In the process called Q cycle, 2 protons are consumed from the matrix, 4 protons are released into the intermembrane space and 2 electrons are passed to cytochrome c. The chain is Cytochrome b-c1 complex subunit 6, mitochondrial (UQCRH) from Homo sapiens (Human).